Reading from the N-terminus, the 332-residue chain is Small ribosomal subunit protein uS2 (332 aa).

This sequence belongs to the universal ribosomal protein uS2 family.

The polypeptide is Small ribosomal subunit protein uS2 (Afipia carboxidovorans (strain ATCC 49405 / DSM 1227 / KCTC 32145 / OM5) (Oligotropha carboxidovorans)).